We begin with the raw amino-acid sequence, 175 residues long: ATP-dependent protease subunit HslV (175 aa).

Thr-2 is a catalytic residue. Na(+)-binding residues include Gly-158, Cys-161, and Thr-164.

Belongs to the peptidase T1B family. HslV subfamily. A double ring-shaped homohexamer of HslV is capped on each side by a ring-shaped HslU homohexamer. The assembly of the HslU/HslV complex is dependent on binding of ATP.

It localises to the cytoplasm. The enzyme catalyses ATP-dependent cleavage of peptide bonds with broad specificity.. With respect to regulation, allosterically activated by HslU binding. Functionally, protease subunit of a proteasome-like degradation complex believed to be a general protein degrading machinery. The polypeptide is ATP-dependent protease subunit HslV (Histophilus somni (strain 129Pt) (Haemophilus somnus)).